The sequence spans 381 residues: Homoserine O-succinyltransferase (381 aa).

Residues 45-360 form the AB hydrolase-1 domain; that stretch reads NAVLVCHALN…PHGHDAFLLD (316 aa). Serine 151 acts as the Nucleophile in catalysis. Substrate is bound at residue arginine 221. Catalysis depends on residues aspartate 321 and histidine 354. Aspartate 355 contacts substrate.

It belongs to the AB hydrolase superfamily. MetX family. In terms of assembly, homodimer.

It localises to the cytoplasm. It carries out the reaction L-homoserine + succinyl-CoA = O-succinyl-L-homoserine + CoA. It functions in the pathway amino-acid biosynthesis; L-methionine biosynthesis via de novo pathway; O-succinyl-L-homoserine from L-homoserine: step 1/1. Its function is as follows. Transfers a succinyl group from succinyl-CoA to L-homoserine, forming succinyl-L-homoserine. The sequence is that of Homoserine O-succinyltransferase from Burkholderia multivorans (strain ATCC 17616 / 249).